The sequence spans 495 residues: Trimethylamine methyltransferase MttB1 (495 aa).

Position 334 (Pyl-334) is a non-standard amino acid, pyrrolysine.

Belongs to the trimethylamine methyltransferase family. Can form a complex with MttC.

It catalyses the reaction Co(I)-[trimethylamine-specific corrinoid protein] + trimethylamine + H(+) = methyl-Co(III)-[trimethylamine-specific corrinoid protein] + dimethylamine. It participates in one-carbon metabolism; methanogenesis from trimethylamine. Functionally, catalyzes the transfer of a methyl group from trimethylamine to the corrinoid cofactor of MttC. This is Trimethylamine methyltransferase MttB1 (mttB1) from Methanosarcina acetivorans (strain ATCC 35395 / DSM 2834 / JCM 12185 / C2A).